The chain runs to 370 residues: 3 beta-hydroxysteroid dehydrogenase/Delta 5--&gt;4-isomerase (370 aa).

Y158 functions as the Proton acceptor in the catalytic mechanism. K162 is an NAD(+) binding site.

It belongs to the 3-beta-HSD family. As to quaternary structure, monomer.

The protein localises to the cytoplasm. It catalyses the reaction a 3beta-hydroxy-Delta(5)-steroid + NAD(+) = a 3-oxo-Delta(5)-steroid + NADH + H(+). The enzyme catalyses cholesterol + NAD(+) = cholest-5-en-3-one + NADH + H(+). It carries out the reaction pregnenolone + NAD(+) = pregn-5-ene-3,20-dione + NADH + H(+). The catalysed reaction is 3beta-hydroxyandrost-5-en-17-one + NAD(+) = androst-5-ene-3,17-dione + NADH + H(+). It catalyses the reaction a 3-oxo-Delta(5)-steroid = a 3-oxo-Delta(4)-steroid. The enzyme catalyses cholest-5-en-3-one = cholest-4-en-3-one. It carries out the reaction pregn-5-ene-3,20-dione = progesterone. The catalysed reaction is androst-5-ene-3,17-dione = androst-4-ene-3,17-dione. The protein operates within lipid metabolism; steroid biosynthesis. 3-beta-HSD is a bifunctional enzyme, that catalyzes the oxidation and isomerization of cholesterol, pregnenolone, and dehydroepiandrosterone (DHEA) into cholest-4-en-3-one, progesterone, and androsterone, respectively. This is 3 beta-hydroxysteroid dehydrogenase/Delta 5--&gt;4-isomerase from Mycobacterium tuberculosis (strain CDC 1551 / Oshkosh).